Here is a 266-residue protein sequence, read N- to C-terminus: HTH-type transcriptional regulator MurR (266 aa).

In terms of domain architecture, HTH rpiR-type spans 1-77 (MLYLTKIRNA…MALIGEYSAS (77 aa)). The H-T-H motif DNA-binding region spans 37-56 (SRQMAKQLGISQSSIVKFAQ). An SIS domain is found at 128–266 (IIEVISKAPF…LLFVGLVQHQ (139 aa)).

As to quaternary structure, homotetramer.

Its pathway is amino-sugar metabolism; N-acetylmuramate degradation [regulation]. In terms of biological role, represses the expression of the murPQ operon involved in the uptake and degradation of N-acetylmuramic acid (MurNAc). Binds to two adjacent inverted repeats within the operator region. MurNAc 6-phosphate, the substrate of MurQ, is the specific inducer that weakens binding of MurR to the operator. The sequence is that of HTH-type transcriptional regulator MurR from Shigella flexneri serotype 5b (strain 8401).